The sequence spans 245 residues: Orotidine 5'-phosphate decarboxylase (245 aa).

Substrate-binding positions include Asp22, Lys44, 71 to 80 (DLKFHDIPNT), Thr131, Arg192, Gln201, Gly221, and Arg222. Residue Lys73 is the Proton donor of the active site.

This sequence belongs to the OMP decarboxylase family. Type 1 subfamily. Homodimer.

It carries out the reaction orotidine 5'-phosphate + H(+) = UMP + CO2. It functions in the pathway pyrimidine metabolism; UMP biosynthesis via de novo pathway; UMP from orotate: step 2/2. In terms of biological role, catalyzes the decarboxylation of orotidine 5'-monophosphate (OMP) to uridine 5'-monophosphate (UMP). The sequence is that of Orotidine 5'-phosphate decarboxylase from Klebsiella pneumoniae (strain 342).